The following is an 85-amino-acid chain: Cytochrome b (85 aa).

A run of 3 helical transmembrane segments spans residues 1–8, 32–53, and 68–85; these read LTGLFLAM, WLIRNIHANGASFFFICIYLHI, and WNVGVVLLLLVMMTAFVG. Residues H38 and H52 each contribute to the heme b site.

It belongs to the cytochrome b family. In terms of assembly, the cytochrome bc1 complex contains 3 respiratory subunits (MT-CYB, CYC1 and UQCRFS1), 2 core proteins (UQCRC1 and UQCRC2) and probably 6 low-molecular weight proteins. It depends on heme b as a cofactor.

The protein resides in the mitochondrion inner membrane. Component of the ubiquinol-cytochrome c reductase complex (complex III or cytochrome b-c1 complex) that is part of the mitochondrial respiratory chain. The b-c1 complex mediates electron transfer from ubiquinol to cytochrome c. Contributes to the generation of a proton gradient across the mitochondrial membrane that is then used for ATP synthesis. This Pomoxis nigromaculatus (Black crappie) protein is Cytochrome b (mt-cyb).